The primary structure comprises 1467 residues: Helicase ARIP4 (1467 aa).

Disordered regions lie at residues 1–150 (MSDE…YAAP) and 186–234 (DSSS…GGTH). The span at 11-49 (PDLDPDVELEDAEEEEEEEEVAVEECDRDDEEDLLDDPS) shows a compositional bias: acidic residues. Residues 72–82 (TSTTSSQSEPS) show a composition bias toward low complexity. A compositionally biased stretch (basic residues) spans 100-115 (KKRAQKPSHMRRNIRK). Glycyl lysine isopeptide (Lys-Gly) (interchain with G-Cter in SUMO2) cross-links involve residues K115 and K127. Composition is skewed to basic and acidic residues over residues 133 to 147 (ELER…RKDY) and 192 to 201 (EDEKSSRDEV). A Glycyl lysine isopeptide (Lys-Gly) (interchain with G-Cter in SUMO2) cross-link involves residue K272. The region spanning 292-512 (RFKTSSGFGC…WCMVDFVRPD (221 aa)) is the Helicase ATP-binding domain. Residue 305–312 (HSMGLGKT) participates in ATP binding. Residues 463-466 (DEGH) carry the DEAH box motif. The LXXLL motif 1 signature appears at 551-555 (LHSLL). The segment at 649–673 (GSAGTSARCPPQGTKGKGEDSTLAS) is disordered. Glycyl lysine isopeptide (Lys-Gly) (interchain with G-Cter in SUMO2) cross-links involve residues K665, K682, K759, K901, K1014, and K1018. Positions 728 to 896 (HLIEESVKLG…RVVDDLNPML (169 aa)) constitute a Helicase C-terminal domain. Residues 1120-1171 (RATGKPKVPEDGRMAASGSQGPSCESTSNGRHSASSPKAPDPEGLARPVSPD) form a disordered region. A compositionally biased stretch (polar residues) spans 1136-1155 (SGSQGPSCESTSNGRHSASS). 2 positions are modified to phosphoserine: S1169 and S1172. Disordered stretches follow at residues 1184–1221 (DVAA…TALG) and 1247–1284 (PVLD…VQPY). The residue at position 1260 (T1260) is a Phosphothreonine. The LXXLL motif 2 signature appears at 1329–1333 (LSNLL). Residues 1445–1467 (AEVGFSSNDDEDKDDDVIEVTGK) form a disordered region. Acidic residues predominate over residues 1452-1467 (NDDEDKDDDVIEVTGK).

It belongs to the SNF2/RAD54 helicase family. Interacts with AR via its N-terminus. Interacts with DYRK1A. Binds DNA and mononucleosomes, but does not seem to form large multiprotein complexes. In terms of processing, sumoylated.

The protein localises to the nucleus. It catalyses the reaction ATP + H2O = ADP + phosphate + H(+). With respect to regulation, enzyme activity is enhanced by dsDNA (double-stranded DNA) and ssDNA (single-stranded DNA). DNA helicase that modulates androgen receptor (AR)-dependent transactivation in a promoter-dependent manner. Not able to remodel mononucleosomes in vitro. The sequence is that of Helicase ARIP4 (RAD54L2) from Homo sapiens (Human).